Consider the following 108-residue polypeptide: UPF0145 protein Npun_F4817 (108 aa).

Belongs to the UPF0145 family.

The chain is UPF0145 protein Npun_F4817 from Nostoc punctiforme (strain ATCC 29133 / PCC 73102).